A 399-amino-acid chain; its full sequence is MAREKFERNKPHVNIGTIGHVDHGKTTLTAAITSVLAKKGQAKVQDYAEIDGAPEERERGITINTAHVEYETDGRHYAHVDCPGHADYVKNMITGAAQMDGAILVCAATDGPMAQTKEHILLAKQVGVPALVVALNKCDMVDDEEIIELVEMEIRELLSSYDFPGDDIPIVQVSGLKAIEGEAEWEAKIDELMDAVDTSIPEPEREIEKPFLMAVEDVFSITGRGTVATGRIERGKVKKGEEIEIVGIRDSRKTTVTGVEMFRKDLDEGLAGDNCGLLLRGIEKEDIERGMVLVKPGSITPHTKFEGQVYVLKKEEGGRHTPFFAGYRPQFYIRTTDVTGQITAFTAEDGSNVEMVMPGDNIKMTGELICPVAIEQGMRFAIREGGRTIGAGVVSKIIQ.

Residues 10 to 204 (KPHVNIGTIG…AVDTSIPEPE (195 aa)) enclose the tr-type G domain. The segment at 19–26 (GHVDHGKT) is G1. 19 to 26 (GHVDHGKT) serves as a coordination point for GTP. Thr-26 is a binding site for Mg(2+). Residues 60 to 64 (GITIN) form a G2 region. Positions 81–84 (DCPG) are G3. GTP-binding positions include 81 to 85 (DCPGH) and 136 to 139 (NKCD). Residues 136 to 139 (NKCD) form a G4 region. Residues 174 to 176 (SGL) form a G5 region.

Belongs to the TRAFAC class translation factor GTPase superfamily. Classic translation factor GTPase family. EF-Tu/EF-1A subfamily. As to quaternary structure, monomer.

It is found in the cytoplasm. The catalysed reaction is GTP + H2O = GDP + phosphate + H(+). GTP hydrolase that promotes the GTP-dependent binding of aminoacyl-tRNA to the A-site of ribosomes during protein biosynthesis. In Prochlorococcus marinus (strain MIT 9303), this protein is Elongation factor Tu.